The chain runs to 248 residues: tRNA (guanine-N(1)-)-methyltransferase (248 aa).

Residues Gly-116 and 136–141 (VGDYVL) each bind S-adenosyl-L-methionine.

This sequence belongs to the RNA methyltransferase TrmD family. In terms of assembly, homodimer.

It localises to the cytoplasm. The catalysed reaction is guanosine(37) in tRNA + S-adenosyl-L-methionine = N(1)-methylguanosine(37) in tRNA + S-adenosyl-L-homocysteine + H(+). Functionally, specifically methylates guanosine-37 in various tRNAs. The polypeptide is tRNA (guanine-N(1)-)-methyltransferase (Psychromonas ingrahamii (strain DSM 17664 / CCUG 51855 / 37)).